A 254-amino-acid chain; its full sequence is HLA class II histocompatibility antigen, DR alpha chain (254 aa).

Residues 1–25 form the signal peptide; that stretch reads MAISGVPVLGFFIIAVLMSAQESWA. Residues 26 to 109 form an alpha-1 region; sequence IKEEHVIIQA…KRSNYTPITN (84 aa). The Extracellular segment spans residues 26-216; that stretch reads IKEEHVIIQA…APSPLPETTE (191 aa). N-linked (GlcNAc...) asparagine glycans are attached at residues Asn103 and Asn143. The segment at 110–203 is alpha-2; that stretch reads VPPEVTVLTN…GLDEPLLKHW (94 aa). The 93-residue stretch at 112–204 folds into the Ig-like C1-type domain; it reads PEVTVLTNSP…LDEPLLKHWE (93 aa). A disulfide bridge links Cys132 with Cys188. The segment at 204–216 is connecting peptide; that stretch reads EFDAPSPLPETTE. Residues 217-239 form a helical membrane-spanning segment; the sequence is NVVCALGLTVGLVGIIIGTIFII. Residues 240–254 lie on the Cytoplasmic side of the membrane; sequence KGLRKSNAAERRGPL. Lys244 is covalently cross-linked (Glycyl lysine isopeptide (Lys-Gly) (interchain with G-Cter in ubiquitin)).

It belongs to the MHC class II family. Heterotrimer that consists of an alpha chain HLA-DRA, a beta chain HLA-DRB and a peptide (peptide-MHCII). Newly synthesized alpha and beta chains forms a heterodimer (MHCII) that associates with the CD74/invariant chain (Ii) in the endoplasmic reticulum (ER). Ii is a trimer composed of three subunits and each subunit interacts with one MHCII dimer, blocking the peptide-binding cleft. As a result, MHCII molecules cannot bind peptides present in the ER. The complex of MHCII and CD74/Ii is transported in vesicles from ER to Golgi to lysosomes, where it encounters antigenic peptides generated via proteolysis of endocytosed antigens. MHCII dimers are dissociated from CD74/Ii by the combined action of proteolysis and HLA-DM. Lysosomal enzymes such as cathepsin, degrade CD74/Ii leaving a 24 amino acid remnant called class II-associated Ii or CLIP. Interacts (via the peptide binding cleft) with CLIP; this interaction inhibits antigen peptide binding before entry in the endosomal compartment. The displacement of CLIP and replacement by a high affinity peptide in lysosomes is performed by HLA-DM heterodimer. HLA-DM catalyzes CLIP dissociation from MHCII, stabilizes empty MHCII and mediates the selection of high affinity peptides. Interacts with HLA-DM heterodimer; this interaction is direct. Interacts (via alpha-1 domain) with TCR (via CDRs). Interacts (via alpha-2 domain) with CD4 (via Ig-like V-type domain); this interaction increases the affinity of TCR for peptide-MHCII. As to quaternary structure, (Microbial infection) Interacts with Epstein-Barr virus BZLF2/gp42. In terms of assembly, (Microbial infection) Interacts with Staphylococcus aureus enterotoxin A/entA, enterotoxin B/entB, enterotoxin C1/entC1, enterotoxin D/entD, and enterotoxin H/entH. In terms of processing, ubiquitinated by MARCHF1 or MARCHF8 at Lys-244 leading to down-regulation of MHCII. When associated with ubiquitination of the beta chain at 'Lys-254', the down-regulation of MHCII may be highly effective. In terms of tissue distribution, expressed in professional APCs: macrophages, dendritic cells and B cells (at protein level). Expressed in thymic epithelial cells (at protein level).

It is found in the cell membrane. Its subcellular location is the endoplasmic reticulum membrane. It localises to the early endosome membrane. The protein resides in the late endosome membrane. The protein localises to the lysosome membrane. It is found in the autolysosome membrane. Functionally, an alpha chain of antigen-presenting major histocompatibility complex class II (MHCII) molecule. In complex with the beta chain HLA-DRB, displays antigenic peptides on professional antigen presenting cells (APCs) for recognition by alpha-beta T cell receptor (TCR) on HLA-DR-restricted CD4-positive T cells. This guides antigen-specific T-helper effector functions, both antibody-mediated immune response and macrophage activation, to ultimately eliminate the infectious agents and transformed cells. Typically presents extracellular peptide antigens of 10 to 30 amino acids that arise from proteolysis of endocytosed antigens in lysosomes. In the tumor microenvironment, presents antigenic peptides that are primarily generated in tumor-resident APCs likely via phagocytosis of apoptotic tumor cells or macropinocytosis of secreted tumor proteins. Presents peptides derived from intracellular proteins that are trapped in autolysosomes after macroautophagy, a mechanism especially relevant for T cell selection in the thymus and central immune tolerance. The selection of the immunodominant epitopes follows two processing modes: 'bind first, cut/trim later' for pathogen-derived antigenic peptides and 'cut first, bind later' for autoantigens/self-peptides. The anchor residue at position 1 of the peptide N-terminus, usually a large hydrophobic residue, is essential for high affinity interaction with MHCII molecules. The chain is HLA class II histocompatibility antigen, DR alpha chain (HLA-DRA) from Homo sapiens (Human).